The primary structure comprises 20 residues: RDVDVGSFLPKSPSDPSMVL.

The interval 1–20 is disordered; the sequence is RDVDVGSFLPKSPSDPSMVL.

The protein resides in the plastid. It is found in the chloroplast thylakoid lumen. The polypeptide is Thylakoid lumenal 20 kDa protein (Spinacia oleracea (Spinach)).